Here is a 210-residue protein sequence, read N- to C-terminus: Ribosomal RNA small subunit methyltransferase G (210 aa).

S-adenosyl-L-methionine contacts are provided by residues Gly80, Leu85, 131 to 132 (VE), and Arg146.

The protein belongs to the methyltransferase superfamily. RNA methyltransferase RsmG family.

The protein resides in the cytoplasm. The catalysed reaction is guanosine(527) in 16S rRNA + S-adenosyl-L-methionine = N(7)-methylguanosine(527) in 16S rRNA + S-adenosyl-L-homocysteine. Specifically methylates the N7 position of guanine in position 527 of 16S rRNA. This is Ribosomal RNA small subunit methyltransferase G from Pasteurella multocida (strain Pm70).